The sequence spans 258 residues: Imidazole glycerol phosphate synthase subunit HisF (258 aa).

Residues D11 and D130 contribute to the active site.

The protein belongs to the HisA/HisF family. As to quaternary structure, heterodimer of HisH and HisF.

The protein resides in the cytoplasm. The catalysed reaction is 5-[(5-phospho-1-deoxy-D-ribulos-1-ylimino)methylamino]-1-(5-phospho-beta-D-ribosyl)imidazole-4-carboxamide + L-glutamine = D-erythro-1-(imidazol-4-yl)glycerol 3-phosphate + 5-amino-1-(5-phospho-beta-D-ribosyl)imidazole-4-carboxamide + L-glutamate + H(+). The protein operates within amino-acid biosynthesis; L-histidine biosynthesis; L-histidine from 5-phospho-alpha-D-ribose 1-diphosphate: step 5/9. In terms of biological role, IGPS catalyzes the conversion of PRFAR and glutamine to IGP, AICAR and glutamate. The HisF subunit catalyzes the cyclization activity that produces IGP and AICAR from PRFAR using the ammonia provided by the HisH subunit. The protein is Imidazole glycerol phosphate synthase subunit HisF of Blochmanniella pennsylvanica (strain BPEN).